Consider the following 138-residue polypeptide: Ostreolysin A6 (138 aa).

This sequence belongs to the aegerolysin family. Monomer.

Its function is as follows. Has hemolytic activity against bovine erythrocytes at nanomolar concentrations in vitro. Promotes active pleurotolysin B (PlyB)-dependent permeabilization of membranes rich in cholesterol and sphingomyelin. May play an important role in the initial phase of fungal fruiting. This Pleurotus ostreatus (Oyster mushroom) protein is Ostreolysin A6 (OlyA6).